Consider the following 187-residue polypeptide: MNLQHHFLIAMPALQDPIFRRSVVYICEYNDEGAMGIIINKPLENLQVEGILEKLKIVPEPRNPEIRLDKPVMLGGPLAEDRGFILHTPPSDFSSSIRISDNTVITTSRDVLETLGTDRQPGNVLVALGYSSWEKGQLEQEILDNAWLTAPADQNILFRTPIADRWREAAKLIGIDIVTMPGVAGHA.

The protein belongs to the UPF0301 (AlgH) family.

The protein is UPF0301 protein KPN78578_33170 of Klebsiella pneumoniae subsp. pneumoniae (strain ATCC 700721 / MGH 78578).